The chain runs to 41 residues: Large ribosomal subunit protein bL36 (41 aa).

The protein belongs to the bacterial ribosomal protein bL36 family.

The chain is Large ribosomal subunit protein bL36 from Chelativorans sp. (strain BNC1).